A 905-amino-acid polypeptide reads, in one-letter code: NADH-quinone oxidoreductase subunit G (905 aa).

The 2Fe-2S ferredoxin-type domain maps to 1-83 (MATIHVDGKT…NTWISIEDEE (83 aa)). 4 residues coordinate [2Fe-2S] cluster: Cys-34, Cys-45, Cys-48, and Cys-67. Residues 83–122 (EAKQFRASVVEWLMTNHPHDCPVCEEGGHCHLQDMTVMTG) enclose the 4Fe-4S His(Cys)3-ligated-type domain. Residues His-99, Cys-103, Cys-106, Cys-112, Cys-151, Cys-154, Cys-157, Cys-201, Cys-228, Cys-231, Cys-235, and Cys-263 each coordinate [4Fe-4S] cluster. In terms of domain architecture, 4Fe-4S Mo/W bis-MGD-type spans 221-277 (MQFAPSICHGCSSGCNISPGERYGEIRRIENRYNGSVNHYFLCDRGRFGYGYVNRED).

This sequence belongs to the complex I 75 kDa subunit family. As to quaternary structure, composed of 13 different subunits. Subunits NuoCD, E, F, and G constitute the peripheral sector of the complex. [2Fe-2S] cluster is required as a cofactor. The cofactor is [4Fe-4S] cluster.

The catalysed reaction is a quinone + NADH + 5 H(+)(in) = a quinol + NAD(+) + 4 H(+)(out). Its function is as follows. NDH-1 shuttles electrons from NADH, via FMN and iron-sulfur (Fe-S) centers, to quinones in the respiratory chain. The immediate electron acceptor for the enzyme in this species is believed to be ubiquinone. Couples the redox reaction to proton translocation (for every two electrons transferred, four hydrogen ions are translocated across the cytoplasmic membrane), and thus conserves the redox energy in a proton gradient. The chain is NADH-quinone oxidoreductase subunit G (nuoG) from Pseudomonas aeruginosa (strain ATCC 15692 / DSM 22644 / CIP 104116 / JCM 14847 / LMG 12228 / 1C / PRS 101 / PAO1).